A 208-amino-acid chain; its full sequence is FMN-dependent NADH:quinone oxidoreductase (208 aa).

Residues 17 to 19 (SNS), 99 to 102 (MWNL), and 143 to 146 (SRGG) each bind FMN.

This sequence belongs to the azoreductase type 1 family. Homodimer. FMN serves as cofactor.

The enzyme catalyses 2 a quinone + NADH + H(+) = 2 a 1,4-benzosemiquinone + NAD(+). It catalyses the reaction N,N-dimethyl-1,4-phenylenediamine + anthranilate + 2 NAD(+) = 2-(4-dimethylaminophenyl)diazenylbenzoate + 2 NADH + 2 H(+). In terms of biological role, quinone reductase that provides resistance to thiol-specific stress caused by electrophilic quinones. Its function is as follows. Also exhibits azoreductase activity. Catalyzes the reductive cleavage of the azo bond in aromatic azo compounds to the corresponding amines. This chain is FMN-dependent NADH:quinone oxidoreductase, found in Staphylococcus carnosus (strain TM300).